We begin with the raw amino-acid sequence, 218 residues long: Protein N-lysine methyltransferase METTL21A (218 aa).

S-adenosyl-L-methionine contacts are provided by residues tryptophan 47, 73 to 75, aspartate 94, tryptophan 125, and alanine 143; that span reads GAG.

The protein belongs to the methyltransferase superfamily. METTL21 family. Interacts with heat shock 70 family members; at least some of these proteins are methylation substrates.

It is found in the cytoplasm. The enzyme catalyses L-lysyl-[protein] + 3 S-adenosyl-L-methionine = N(6),N(6),N(6)-trimethyl-L-lysyl-[protein] + 3 S-adenosyl-L-homocysteine + 3 H(+). Protein-lysine methyltransferase that selectively trimethylates residues in heat shock protein 70 (HSP70) family members. Contributes to the in vivo trimethylation of Lys residues in HSPA1 and HSPA8. In vitro methylates 'Lys-561' in HSPA1, 'Lys-564' in HSPA2, 'Lys-585' in HSPA5, 'Lys-563' in HSPA6 and 'Lys-561' in HSPA8. This Bos taurus (Bovine) protein is Protein N-lysine methyltransferase METTL21A (METTL21A).